The chain runs to 424 residues: Lactate racemase (424 aa).

72 to 75 (DHTR) lines the Ni(II)-pyridinium-3,5-bisthiocarboxylate mononucleotide pocket. Residues His-108 and His-174 each act as proton donor/acceptor in the active site. Ni(II)-pyridinium-3,5-bisthiocarboxylate mononucleotide is bound by residues Lys-184 and His-200. Positions 295 and 298 each coordinate substrate.

It belongs to the lactate racemase family. In terms of assembly, homodimer. Ni(II)-pyridinium-3,5-bisthiocarboxylate mononucleotide serves as cofactor.

It carries out the reaction (S)-lactate = (R)-lactate. With respect to regulation, activation of the apo-enzyme requires the three accessory proteins LarB, LarE and LarC, that are involved in the biosynthesis of the nickel-pincer cofactor of LarA. Inhibited by sulfite that behaves as a mixed inhibitor. Catalyzes the interconversion between the D- and L-isomers of lactate. May act as a rescue enzyme to ensure D-lactate production in physiological conditions where its production by the D-lactate dehydrogenase LdhD is not sufficient. D-Lactate is absolutely required for growth of L.plantarum and is an essential component of the cell wall peptidoglycan in this species, where it is incorporated as the last residue of the muramoyl-pentadepsipeptide peptidoglycan precursor; its incorporation confers high level of vancomycin resistance. The polypeptide is Lactate racemase (Lactiplantibacillus plantarum (strain ATCC BAA-793 / NCIMB 8826 / WCFS1) (Lactobacillus plantarum)).